The following is a 269-amino-acid chain: Formamidopyrimidine-DNA glycosylase (269 aa).

Pro2 acts as the Schiff-base intermediate with DNA in catalysis. The active-site Proton donor is the Glu3. The Proton donor; for beta-elimination activity role is filled by Lys57. Positions 90, 109, and 150 each coordinate DNA. Residues 235-269 (QVYGRKGEPCRVCGTPIVATKHAQRATFYCRHCQK) form an FPG-type zinc finger. Arg259 acts as the Proton donor; for delta-elimination activity in catalysis.

Belongs to the FPG family. As to quaternary structure, monomer. Zn(2+) is required as a cofactor.

The enzyme catalyses Hydrolysis of DNA containing ring-opened 7-methylguanine residues, releasing 2,6-diamino-4-hydroxy-5-(N-methyl)formamidopyrimidine.. It carries out the reaction 2'-deoxyribonucleotide-(2'-deoxyribose 5'-phosphate)-2'-deoxyribonucleotide-DNA = a 3'-end 2'-deoxyribonucleotide-(2,3-dehydro-2,3-deoxyribose 5'-phosphate)-DNA + a 5'-end 5'-phospho-2'-deoxyribonucleoside-DNA + H(+). Functionally, involved in base excision repair of DNA damaged by oxidation or by mutagenic agents. Acts as a DNA glycosylase that recognizes and removes damaged bases. Has a preference for oxidized purines, such as 7,8-dihydro-8-oxoguanine (8-oxoG). Has AP (apurinic/apyrimidinic) lyase activity and introduces nicks in the DNA strand. Cleaves the DNA backbone by beta-delta elimination to generate a single-strand break at the site of the removed base with both 3'- and 5'-phosphates. The polypeptide is Formamidopyrimidine-DNA glycosylase (Salmonella newport (strain SL254)).